Reading from the N-terminus, the 291-residue chain is Ribosomal RNA small subunit methyltransferase I (291 aa).

This sequence belongs to the methyltransferase superfamily. RsmI family.

It is found in the cytoplasm. It carries out the reaction cytidine(1402) in 16S rRNA + S-adenosyl-L-methionine = 2'-O-methylcytidine(1402) in 16S rRNA + S-adenosyl-L-homocysteine + H(+). In terms of biological role, catalyzes the 2'-O-methylation of the ribose of cytidine 1402 (C1402) in 16S rRNA. The protein is Ribosomal RNA small subunit methyltransferase I of Neisseria meningitidis serogroup A / serotype 4A (strain DSM 15465 / Z2491).